A 397-amino-acid chain; its full sequence is Argininosuccinate synthase (397 aa).

7 to 15 contributes to the ATP binding site; sequence AFSGGLDTT. Tyrosine 84 serves as a coordination point for L-citrulline. ATP is bound at residue glycine 114. L-aspartate contacts are provided by threonine 116, asparagine 120, and aspartate 121. Asparagine 120 contacts L-citrulline. L-citrulline-binding residues include arginine 124, serine 170, serine 179, glutamate 254, and tyrosine 266.

It belongs to the argininosuccinate synthase family. Type 1 subfamily. Homotetramer.

Its subcellular location is the cytoplasm. The catalysed reaction is L-citrulline + L-aspartate + ATP = 2-(N(omega)-L-arginino)succinate + AMP + diphosphate + H(+). It functions in the pathway amino-acid biosynthesis; L-arginine biosynthesis; L-arginine from L-ornithine and carbamoyl phosphate: step 2/3. In Haloquadratum walsbyi (strain DSM 16790 / HBSQ001), this protein is Argininosuccinate synthase.